The primary structure comprises 320 residues: Adenosine receptor A3 (320 aa).

The Extracellular portion of the chain corresponds to 1–16; the sequence is MKANNTTTSALWLQIT. Asn4 and Asn5 each carry an N-linked (GlcNAc...) asparagine glycan. Residues 17–39 traverse the membrane as a helical segment; sequence YITMEAAIGLCAVVGNMLVIWVV. Over 40 to 50 the chain is Cytoplasmic; the sequence is KLNRTLRTTTF. A helical transmembrane segment spans residues 51 to 74; sequence YFIVSLALADIAVGVLVIPLAIAV. Topologically, residues 75-86 are extracellular; the sequence is SLEVQMHFYACL. Cys85 and Cys168 form a disulfide bridge. The helical transmembrane segment at 87 to 108 threads the bilayer; sequence FMSCVLLVFTHASIMSLLAIAV. Residues 109 to 128 are Cytoplasmic-facing; sequence DRYLRVKLTVRYRTVTTQRR. A helical membrane pass occupies residues 129-150; sequence IWLFLGLCWLVSFLVGLTPMFG. Residues 151–179 are Extracellular-facing; the sequence is WNRKVTLELSQNSSTLSCHFRSVVGLDYM. The helical transmembrane segment at 180 to 200 threads the bilayer; it reads VFFSFITWILIPLVVMCIIYL. The Cytoplasmic portion of the chain corresponds to 201–233; that stretch reads DIFYIIRNKLSQNLTGFRETRAFYGREFKTAKS. A helical membrane pass occupies residues 234–257; sequence LFLVLFLFALCWLPLSIINFVSYF. Residues 258 to 263 lie on the Extracellular side of the membrane; sequence NVKIPE. The helical transmembrane segment at 264 to 286 threads the bilayer; the sequence is IAMCLGILLSHANSMMNPIVYAC. Topologically, residues 287–320 are cytoplasmic; it reads KIKKFKETYFVILRACRLCQTSDSLDSNLEQTTE. The S-palmitoyl cysteine moiety is linked to residue Cys305. A phosphothreonine mark is found at Thr307, Thr318, and Thr319.

It belongs to the G-protein coupled receptor 1 family. Phosphorylation on Thr-318 and Thr-319 may be crucial for rapid desensitization. Phosphorylation on Thr-318 may be necessary for phosphorylation on Thr-319 to occur. Testis, particularly in spermatocytes and spermatids but not in spermatogonia. Low levels in the brain.

The protein localises to the cell membrane. Its function is as follows. Receptor for adenosine. The activity of this receptor is mediated by G proteins which inhibits adenylyl cyclase. May play a role during reproduction. This is Adenosine receptor A3 (Adora3) from Rattus norvegicus (Rat).